A 250-amino-acid polypeptide reads, in one-letter code: Triosephosphate isomerase (250 aa).

9-11 (NWK) contributes to the substrate binding site. Residue H100 is the Electrophile of the active site. E169 functions as the Proton acceptor in the catalytic mechanism. Residues G175, S208, and 229–230 (GG) contribute to the substrate site.

This sequence belongs to the triosephosphate isomerase family. As to quaternary structure, homodimer.

The protein resides in the cytoplasm. The catalysed reaction is D-glyceraldehyde 3-phosphate = dihydroxyacetone phosphate. Its pathway is carbohydrate biosynthesis; gluconeogenesis. It participates in carbohydrate degradation; glycolysis; D-glyceraldehyde 3-phosphate from glycerone phosphate: step 1/1. Functionally, involved in the gluconeogenesis. Catalyzes stereospecifically the conversion of dihydroxyacetone phosphate (DHAP) to D-glyceraldehyde-3-phosphate (G3P). This is Triosephosphate isomerase from Synechococcus sp. (strain JA-2-3B'a(2-13)) (Cyanobacteria bacterium Yellowstone B-Prime).